Here is a 514-residue protein sequence, read N- to C-terminus: Maturase K (514 aa).

Belongs to the intron maturase 2 family. MatK subfamily.

Its subcellular location is the plastid. It localises to the chloroplast. Functionally, usually encoded in the trnK tRNA gene intron. Probably assists in splicing its own and other chloroplast group II introns. The protein is Maturase K of Plantago argentea (Silver plantain).